The primary structure comprises 105 residues: MSKQKELFANEEIAEAEKTKLQPPPMYKVVLNNDDYTPMEFVVEVLQKFFGMDLDKATQVMLSVHYSGKGVCGTFTAEIAETKVVQVNTYARNNEHPLLCTMEKA.

Belongs to the ClpS family. As to quaternary structure, binds to the N-terminal domain of the chaperone ClpA.

In terms of biological role, involved in the modulation of the specificity of the ClpAP-mediated ATP-dependent protein degradation. The chain is ATP-dependent Clp protease adapter protein ClpS from Aeromonas hydrophila subsp. hydrophila (strain ATCC 7966 / DSM 30187 / BCRC 13018 / CCUG 14551 / JCM 1027 / KCTC 2358 / NCIMB 9240 / NCTC 8049).